The following is a 511-amino-acid chain: Maturase K (511 aa).

The protein belongs to the intron maturase 2 family. MatK subfamily.

It is found in the plastid. The protein localises to the chloroplast. In terms of biological role, usually encoded in the trnK tRNA gene intron. Probably assists in splicing its own and other chloroplast group II introns. The chain is Maturase K from Avena sativa (Oat).